A 195-amino-acid polypeptide reads, in one-letter code: Translation initiation factor IF-3 (195 aa).

The tract at residues 158-195 (EQSEVQQRPKREGRNMIMFLSPRKTPLIKKEEDAKENN) is disordered. The span at 185-195 (IKKEEDAKENN) shows a compositional bias: basic and acidic residues.

The protein belongs to the IF-3 family. As to quaternary structure, monomer.

The protein resides in the cytoplasm. Its function is as follows. IF-3 binds to the 30S ribosomal subunit and shifts the equilibrium between 70S ribosomes and their 50S and 30S subunits in favor of the free subunits, thus enhancing the availability of 30S subunits on which protein synthesis initiation begins. In Prochlorococcus marinus (strain MIT 9515), this protein is Translation initiation factor IF-3.